The sequence spans 485 residues: Glutamyl-tRNA(Gln) amidotransferase subunit A (485 aa).

Active-site charge relay system residues include Lys74 and Ser149. Ser173 acts as the Acyl-ester intermediate in catalysis.

The protein belongs to the amidase family. GatA subfamily. Heterotrimer of A, B and C subunits.

The enzyme catalyses L-glutamyl-tRNA(Gln) + L-glutamine + ATP + H2O = L-glutaminyl-tRNA(Gln) + L-glutamate + ADP + phosphate + H(+). Allows the formation of correctly charged Gln-tRNA(Gln) through the transamidation of misacylated Glu-tRNA(Gln) in organisms which lack glutaminyl-tRNA synthetase. The reaction takes place in the presence of glutamine and ATP through an activated gamma-phospho-Glu-tRNA(Gln). This chain is Glutamyl-tRNA(Gln) amidotransferase subunit A, found in Synechococcus sp. (strain RCC307).